The primary structure comprises 529 residues: tRNA pseudouridine synthase Pus10 (529 aa).

2 residues coordinate Zn(2+): C21 and C24. A coiled-coil region spans residues 42–89; sequence KELLNELQKFLETEKDELILEVMNPPPKKIRLQELEDSIDNLSQNGEG. A phosphoserine mark is found at S79 and S84. Residues C109 and C112 each contribute to the Zn(2+) site. Residues 304-317 form an RNA binding forefinger loop region; it reads TPWIIDGERKLESS. The active-site Nucleophile is the D344. An RNA binding thumb loop region spans residues 442 to 457; it reads QKTPLRVLHRRPLAVR.

The protein belongs to the pseudouridine synthase Pus10 family. As to quaternary structure, interacts with components of the microprocessor complex DROSHA and DGCR8. Post-translationally, proteolytically cleaved during TRAIL-induced cell death. Cleaved, in vitro, either by caspase-3 (CASP3) or caspase-8 (CASP8).

It localises to the nucleus. It is found in the cytoplasm. The protein localises to the mitochondrion. It carries out the reaction uridine(55) in tRNA = pseudouridine(55) in tRNA. The catalysed reaction is uridine(54) in tRNA = pseudouridine(54) in tRNA. Protein with different functions depending on its subcellular location: involved in miRNA processing in the nucleus and acts as a tRNA pseudouridylate synthase in the cytoplasm. In the cytoplasm, acts as a pseudouridylate synthase by catalyzing synthesis of pseudouridine(54) and pseudouridine(55) from uracil-54 and uracil-55, respectively, in the psi GC loop of a subset of tRNAs. tRNA pseudouridylate synthase activity is enhanced by the presence of 1-methyladenosine at position 53-61 of tRNAs. Does not show tRNA pseudouridylate synthase activity in the nucleus. In the nucleus, promotes primary microRNAs (pri-miRNAs) processing independently of its RNA pseudouridylate synthase activity. Binds pri-miRNAs. Modulator of TRAIL/TNFSF10-induced cell death via activation of procaspase-8 and BID cleavage. Required for the progression of the apoptotic signal through intrinsic mitochondrial cell death. The chain is tRNA pseudouridine synthase Pus10 from Homo sapiens (Human).